Consider the following 201-residue polypeptide: MKRNWRQHYNVFLANLVLVFGFALNILVAKQSLNNTTPQFRFLFVTPFLGVVIGAVLYFFDVKWFLIDYPYKKFHFQKKWAIVYLSGVIVFFLNVLIGVVLLVVMVNYITNQILEREYERLFTNSLPYLWSTTGTSIVLSLISIGMSKTAHFFIDIEILKAKKGEPTDPNKTDNRAVVINLDENKKNEKEQSPPSAEMTSL.

A run of 4 helical transmembrane segments spans residues 9-29, 42-62, 86-106, and 126-146; these read YNVF…ILVA, FLFV…FFDV, SGVI…VVMV, and LPYL…SIGM. Basic and acidic residues-rich tracts occupy residues 165–174 and 182–191; these read EPTDPNKTDN and DENKKNEKEQ. The tract at residues 165–201 is disordered; that stretch reads EPTDPNKTDNRAVVINLDENKKNEKEQSPPSAEMTSL. Over residues 192 to 201 the composition is skewed to polar residues; the sequence is SPPSAEMTSL.

Its subcellular location is the cell membrane. This is an uncharacterized protein from Mycoplasma genitalium (strain ATCC 33530 / DSM 19775 / NCTC 10195 / G37) (Mycoplasmoides genitalium).